The chain runs to 130 residues: Small ribosomal subunit protein uS9 (130 aa).

This sequence belongs to the universal ribosomal protein uS9 family.

This chain is Small ribosomal subunit protein uS9, found in Delftia acidovorans (strain DSM 14801 / SPH-1).